The sequence spans 208 residues: N-(5'-phosphoribosyl)anthranilate isomerase (208 aa).

This sequence belongs to the TrpF family.

The catalysed reaction is N-(5-phospho-beta-D-ribosyl)anthranilate = 1-(2-carboxyphenylamino)-1-deoxy-D-ribulose 5-phosphate. Its pathway is amino-acid biosynthesis; L-tryptophan biosynthesis; L-tryptophan from chorismate: step 3/5. The protein is N-(5'-phosphoribosyl)anthranilate isomerase of Nitrosomonas eutropha (strain DSM 101675 / C91 / Nm57).